The primary structure comprises 158 residues: Phosphopantetheine adenylyltransferase (158 aa).

Threonine 10 contributes to the substrate binding site. ATP is bound by residues 10–11 and histidine 18; that span reads TF. Lysine 42, leucine 74, and arginine 88 together coordinate substrate. ATP-binding positions include 89–91, glutamate 99, and 124–130; these read GLR and NSFISST.

The protein belongs to the bacterial CoaD family. As to quaternary structure, homohexamer. It depends on Mg(2+) as a cofactor.

The protein localises to the cytoplasm. It catalyses the reaction (R)-4'-phosphopantetheine + ATP + H(+) = 3'-dephospho-CoA + diphosphate. It functions in the pathway cofactor biosynthesis; coenzyme A biosynthesis; CoA from (R)-pantothenate: step 4/5. Its function is as follows. Reversibly transfers an adenylyl group from ATP to 4'-phosphopantetheine, yielding dephospho-CoA (dPCoA) and pyrophosphate. The protein is Phosphopantetheine adenylyltransferase of Shewanella woodyi (strain ATCC 51908 / MS32).